We begin with the raw amino-acid sequence, 325 residues long: MIALGIEGTAHTLGIGIVTEKSVLANVFDTLTTEKGGIHPKEAAEHHARLLKPLLRKALETAGVTMEDVDLIAFSQGPGLGPALRVVATAARALAIKYNKPIVGVNHCIAHVEITKMFGVKDPVGLYVSGGNTQVLALEGGRYRVFGETLDIGIGNAIDTFARELGIGFPGGPKIEKLALKGEKYIELPYAVKGMDLSFSGVLTEAVRKYRTGKYRIEDLAYSFQETAFAALVEVTERAVAHTGKEEVVLVGGVAANNRLREMLKIMAEDRGIKFFVPPYDLCRDNGAMIAYTGLRMYRGGVRFKIEDTVVKQKFRTDEVEVVWD.

His107, His111, and Tyr127 together coordinate Fe cation. Residues 127–131, Asp159, Gly172, Glu176, and Asn257 each bind substrate; that span reads YVSGG. Asp285 is a binding site for Fe cation.

The protein belongs to the KAE1 / TsaD family. Monomer. Component of the KEOPS complex that consists of Kae1, Bud32, Cgi121 and Pcc1; the whole complex dimerizes. The cofactor is Fe(2+).

The protein resides in the cytoplasm. It catalyses the reaction L-threonylcarbamoyladenylate + adenosine(37) in tRNA = N(6)-L-threonylcarbamoyladenosine(37) in tRNA + AMP + H(+). Its function is as follows. Required for the formation of a threonylcarbamoyl group on adenosine at position 37 (t(6)A37) in tRNAs that read codons beginning with adenine. Is a component of the KEOPS complex that is probably involved in the transfer of the threonylcarbamoyl moiety of threonylcarbamoyl-AMP (TC-AMP) to the N6 group of A37. Kae1 likely plays a direct catalytic role in this reaction, but requires other protein(s) of the complex to fulfill this activity. The protein is tRNA N6-adenosine threonylcarbamoyltransferase of Thermococcus kodakarensis (strain ATCC BAA-918 / JCM 12380 / KOD1) (Pyrococcus kodakaraensis (strain KOD1)).